We begin with the raw amino-acid sequence, 347 residues long: Core-capsid bridging protein (347 aa).

Positions 290-320 (GYRGTTFQRRATAPSRRRGPSRRRRRRKATL) are disordered. Residues 304-318 (SRRRGPSRRRRRRKA) are compositionally biased toward basic residues.

The protein belongs to the adenoviridae core-capsid bridging protein family. Monomer. Homodimer. Exists in equilibrium between monomers and dimers in solution. Interacts with the histone-like nucleoprotein; this interactions bridge the virus core to the capsid. Interacts with core protein X; this interactions bridge the virus core to the capsid. Interacts with the endosome lysis protein VI; this interactions bridge the virus core to the capsid. Interacts with the peripentonal hexons. Interacts with host NPM1; this interaction might play a role in virus assembly.

Its subcellular location is the virion. It is found in the host nucleus. The protein resides in the host nucleolus. Its function is as follows. Associates loosely with the viral DNA to form an outer shell around the nucleoprotein-DNA complex and links it with the capsid by binding the endosome lysis protein. Dissociates from the viral genome during entry. Might be involved in nuclear capsid assembly of the viral particles through its association with NPM1/nucleophosmin. This chain is Core-capsid bridging protein, found in Homo sapiens (Human).